The chain runs to 1107 residues: Rho GTPase-activating protein 39 (1107 aa).

Positions 1-21 (MSQAQDYECRSHHVDEQEPRI) are disordered. N-acetylserine is present on serine 2. Basic and acidic residues predominate over residues 7 to 19 (YECRSHHVDEQEP). 2 WW domains span residues 25–58 (STRL…PPAG) and 63–97 (RTSE…RPQN). Over residues 111 to 122 (QNTESPRASADN) the composition is skewed to polar residues. Disordered regions lie at residues 111–173 (QNTE…PPGV), 218–267 (PSFL…PERR), 282–311 (SPLL…LYEE), and 326–370 (MDVQ…LMRT). Low complexity predominate over residues 123-136 (SPGRGSRDGSTGSS). The span at 242 to 254 (SGSQHSPNLQTFV) shows a compositional bias: polar residues. Residue serine 282 is modified to Phosphoserine. Composition is skewed to polar residues over residues 331-343 (EANS…SPQR) and 353-369 (LQTT…QLMR). Phosphoserine is present on residues serine 380, serine 384, serine 402, and serine 403. 3 disordered regions span residues 404 to 429 (PKLR…QPSP), 441 to 529 (SGDY…RASL), and 563 to 585 (MKQR…GAVP). Positions 470–484 (SWSSQQDTMSSTGYS) are enriched in polar residues. A phosphoserine mark is found at serine 597, serine 683, serine 708, and serine 719. Residues 715–867 (WSSESIKKPM…PYVEEPDGVA (153 aa)) form the MyTH4 domain. Positions 914–1102 (SALQEVMSMQ…VLIQHLDTSF (189 aa)) constitute a Rho-GAP domain.

It localises to the nucleus. The protein is Rho GTPase-activating protein 39 (Arhgap39) of Mus musculus (Mouse).